Consider the following 365-residue polypeptide: Paraneoplastic antigen Ma2 homolog (365 aa).

At A2 the chain carries N-acetylalanine. The segment at 336-365 is disordered; that stretch reads EEEDAYFEQESREEPGEREGSGCWNNSRNN. A compositionally biased stretch (basic and acidic residues) spans 344-355; it reads QESREEPGEREG.

Belongs to the PNMA family. Expressed in the cerebrum, cerebellum and testis.

It localises to the nucleus. Its subcellular location is the nucleolus. The sequence is that of Paraneoplastic antigen Ma2 homolog (Pnma2) from Mus musculus (Mouse).